The chain runs to 200 residues: MEPYTLLLFIFVIQIVKQIISAVGKQSIESISWVLYCRVAPKFGHSKLASMSQKSSQLRTVAGERRAVSAQDQYAKWTKLNRQHDKLVAEIEQLQKEVDLDKVKVNTFTGYLIAILTSIPIWFFRVWYRSVVLFYFPPGILPRALEWSIALPFTVTGGVSLTVWMMAAGAVASSLTFLFMFPFEKAVPKPVLAKKSPQQL.

At 1–6 the chain is on the lumenal side; sequence MEPYTL. A helical membrane pass occupies residues 7 to 26; that stretch reads LLFIFVIQIVKQIISAVGKQ. Residues 27-113 are Cytoplasmic-facing; that stretch reads SIESISWVLY…KVNTFTGYLI (87 aa). Residues 75–107 are a coiled coil; sequence AKWTKLNRQHDKLVAEIEQLQKEVDLDKVKVNT. A helical membrane pass occupies residues 114–134; it reads AILTSIPIWFFRVWYRSVVLF. Topologically, residues 135-158 are lumenal; sequence YFPPGILPRALEWSIALPFTVTGG. The chain crosses the membrane as a helical span at residues 159 to 175; sequence VSLTVWMMAAGAVASSL. Topologically, residues 176 to 200 are cytoplasmic; the sequence is TFLFMFPFEKAVPKPVLAKKSPQQL.

It belongs to the WRB/GET1 family. In terms of assembly, component of the Golgi to ER traffic (GET) complex, which is composed of GET1, GET2 and GET3. Within the complex, GET1 and GET2 form a heterotetramer which is stabilized by phosphatidylinositol binding and which binds to the GET3 homodimer.

It localises to the endoplasmic reticulum membrane. It is found in the golgi apparatus membrane. Required for the post-translational delivery of tail-anchored (TA) proteins to the endoplasmic reticulum. Together with GET2, acts as a membrane receptor for soluble GET3, which recognizes and selectively binds the transmembrane domain of TA proteins in the cytosol. The GET complex cooperates with the HDEL receptor ERD2 to mediate the ATP-dependent retrieval of resident ER proteins that contain a C-terminal H-D-E-L retention signal from the Golgi to the ER. This Meyerozyma guilliermondii (strain ATCC 6260 / CBS 566 / DSM 6381 / JCM 1539 / NBRC 10279 / NRRL Y-324) (Yeast) protein is Golgi to ER traffic protein 1.